Consider the following 477-residue polypeptide: Glycogen synthase (477 aa).

Lys15 contacts ADP-alpha-D-glucose.

It belongs to the glycosyltransferase 1 family. Bacterial/plant glycogen synthase subfamily.

It carries out the reaction [(1-&gt;4)-alpha-D-glucosyl](n) + ADP-alpha-D-glucose = [(1-&gt;4)-alpha-D-glucosyl](n+1) + ADP + H(+). It functions in the pathway glycan biosynthesis; glycogen biosynthesis. In terms of biological role, synthesizes alpha-1,4-glucan chains using ADP-glucose. The polypeptide is Glycogen synthase (Salmonella typhi).